Reading from the N-terminus, the 626-residue chain is tRNA uridine 5-carboxymethylaminomethyl modification enzyme MnmG (626 aa).

13–18 (GGGHAG) contacts FAD. 273–287 (GPRYCPSIEDKIHRF) is a binding site for NAD(+).

This sequence belongs to the MnmG family. As to quaternary structure, homodimer. Heterotetramer of two MnmE and two MnmG subunits. FAD serves as cofactor.

It is found in the cytoplasm. Functionally, NAD-binding protein involved in the addition of a carboxymethylaminomethyl (cmnm) group at the wobble position (U34) of certain tRNAs, forming tRNA-cmnm(5)s(2)U34. The sequence is that of tRNA uridine 5-carboxymethylaminomethyl modification enzyme MnmG from Acinetobacter baumannii (strain AYE).